We begin with the raw amino-acid sequence, 260 residues long: Lysine/arginine/ornithine-binding periplasmic protein (260 aa).

The first 22 residues, methionine 1–alanine 22, serve as a signal peptide directing secretion. An L-arginine-binding site is contributed by aspartate 33. L-lysine is bound at residue aspartate 33. Residue aspartate 33 coordinates L-ornithine. Cysteine 60 and cysteine 67 are disulfide-bonded. The L-arginine site is built by serine 91, serine 92, serine 94, arginine 99, threonine 143, and aspartate 183. Residues serine 91, serine 92, serine 94, arginine 99, threonine 143, and aspartate 183 each coordinate L-ornithine. Serine 92, serine 94, arginine 99, and threonine 143 together coordinate L-lysine.

It belongs to the bacterial solute-binding protein 3 family. As to quaternary structure, the complex is composed of two ATP-binding proteins (HisP), two transmembrane proteins (HisM and HisQ) and a solute-binding protein (ArgT).

Its subcellular location is the periplasm. In terms of biological role, part of the ABC transporter complex HisPMQ-ArgT involved in lysine/arginine/ornithine transport. Binds lysine, arginine and ornithine. Stimulates ATPase activity of HisP. The sequence is that of Lysine/arginine/ornithine-binding periplasmic protein (argT) from Escherichia coli (strain K12).